A 632-amino-acid chain; its full sequence is DNA ligase (632 aa).

Residues 45-49 (NEDYD) and 89-90 (SI) contribute to the NAD(+) site. The N6-AMP-lysine intermediate role is filled by Lys127. NAD(+) is bound by residues Arg143, Glu174, and Lys286. Cys374, Cys377, Cys390, and Cys396 together coordinate Zn(2+). One can recognise a BRCT domain in the interval 561–632 (DKRIVFTGKM…EADYLSKITM (72 aa)).

Belongs to the NAD-dependent DNA ligase family. LigA subfamily. It depends on Mg(2+) as a cofactor. Requires Mn(2+) as cofactor.

It catalyses the reaction NAD(+) + (deoxyribonucleotide)n-3'-hydroxyl + 5'-phospho-(deoxyribonucleotide)m = (deoxyribonucleotide)n+m + AMP + beta-nicotinamide D-nucleotide.. DNA ligase that catalyzes the formation of phosphodiester linkages between 5'-phosphoryl and 3'-hydroxyl groups in double-stranded DNA using NAD as a coenzyme and as the energy source for the reaction. It is essential for DNA replication and repair of damaged DNA. The chain is DNA ligase from Vesicomyosocius okutanii subsp. Calyptogena okutanii (strain HA).